The primary structure comprises 209 residues: Large ribosomal subunit protein uL3 (209 aa).

Residues 127–147 form a disordered region; sequence YSRGPMGHGSKSHRVAGARSA.

The protein belongs to the universal ribosomal protein uL3 family. Part of the 50S ribosomal subunit. Forms a cluster with proteins L14 and L19.

One of the primary rRNA binding proteins, it binds directly near the 3'-end of the 23S rRNA, where it nucleates assembly of the 50S subunit. This chain is Large ribosomal subunit protein uL3, found in Finegoldia magna (strain ATCC 29328 / DSM 20472 / WAL 2508) (Peptostreptococcus magnus).